The chain runs to 464 residues: Methylenetetrahydrofolate--tRNA-(uracil-5-)-methyltransferase TrmFO (464 aa).

13–18 (GGGLAG) contacts FAD.

It belongs to the MnmG family. TrmFO subfamily. FAD is required as a cofactor.

It is found in the cytoplasm. The enzyme catalyses uridine(54) in tRNA + (6R)-5,10-methylene-5,6,7,8-tetrahydrofolate + NADH + H(+) = 5-methyluridine(54) in tRNA + (6S)-5,6,7,8-tetrahydrofolate + NAD(+). It catalyses the reaction uridine(54) in tRNA + (6R)-5,10-methylene-5,6,7,8-tetrahydrofolate + NADPH + H(+) = 5-methyluridine(54) in tRNA + (6S)-5,6,7,8-tetrahydrofolate + NADP(+). In terms of biological role, catalyzes the folate-dependent formation of 5-methyl-uridine at position 54 (M-5-U54) in all tRNAs. The sequence is that of Methylenetetrahydrofolate--tRNA-(uracil-5-)-methyltransferase TrmFO from Bartonella bacilliformis (strain ATCC 35685 / KC583 / Herrer 020/F12,63).